Here is a 72-residue protein sequence, read N- to C-terminus: Heat-stable enterotoxin C (72 aa).

Positions 1 to 19 are cleaved as a signal peptide; that stretch reads MKKIVFVLTLMLFSFGTLG. 3 cysteine pairs are disulfide-bonded: C60–C65, C61–C69, and C64–C72.

Belongs to the heat-stable enterotoxin family.

The protein localises to the secreted. Toxin which activates the particulate form of guanylate cyclase and increases cyclic GMP levels within the host intestinal epithelial cells. Highly toxic. In Yersinia enterocolitica, this protein is Heat-stable enterotoxin C (ystC).